Consider the following 399-residue polypeptide: Argininosuccinate synthase (399 aa).

Residue 9-17 (AYSGGLDTS) participates in ATP binding. An L-citrulline-binding site is contributed by Y87. G117 lines the ATP pocket. Residues T119, N123, and D124 each contribute to the L-aspartate site. N123 serves as a coordination point for L-citrulline. Residues R127, S176, S185, E261, and Y273 each coordinate L-citrulline.

It belongs to the argininosuccinate synthase family. Type 1 subfamily. Homotetramer.

It localises to the cytoplasm. The catalysed reaction is L-citrulline + L-aspartate + ATP = 2-(N(omega)-L-arginino)succinate + AMP + diphosphate + H(+). Its pathway is amino-acid biosynthesis; L-arginine biosynthesis; L-arginine from L-ornithine and carbamoyl phosphate: step 2/3. This is Argininosuccinate synthase from Chlorobium chlorochromatii (strain CaD3).